The chain runs to 96 residues: Cytochrome b (96 aa).

The next 3 membrane-spanning stretches (helical) occupy residues Leu-1 to Met-15, Trp-39 to Ile-60, and Trp-75 to Leu-95. Residues His-45 and His-59 each contribute to the heme b site.

It belongs to the cytochrome b family. In terms of assembly, the cytochrome bc1 complex contains 3 respiratory subunits (MT-CYB, CYC1 and UQCRFS1), 2 core proteins (UQCRC1 and UQCRC2) and probably 6 low-molecular weight proteins. The cofactor is heme b.

It localises to the mitochondrion inner membrane. In terms of biological role, component of the ubiquinol-cytochrome c reductase complex (complex III or cytochrome b-c1 complex) that is part of the mitochondrial respiratory chain. The b-c1 complex mediates electron transfer from ubiquinol to cytochrome c. Contributes to the generation of a proton gradient across the mitochondrial membrane that is then used for ATP synthesis. The sequence is that of Cytochrome b (mt-cyb) from Geophagus steindachneri (Red hump earth eater).